Reading from the N-terminus, the 346-residue chain is N-acetyl-gamma-glutamyl-phosphate reductase (346 aa).

C150 is an active-site residue.

Belongs to the NAGSA dehydrogenase family. Type 1 subfamily.

It localises to the cytoplasm. It catalyses the reaction N-acetyl-L-glutamate 5-semialdehyde + phosphate + NADP(+) = N-acetyl-L-glutamyl 5-phosphate + NADPH + H(+). Its pathway is amino-acid biosynthesis; L-arginine biosynthesis; N(2)-acetyl-L-ornithine from L-glutamate: step 3/4. Catalyzes the NADPH-dependent reduction of N-acetyl-5-glutamyl phosphate to yield N-acetyl-L-glutamate 5-semialdehyde. This chain is N-acetyl-gamma-glutamyl-phosphate reductase, found in Desulforamulus reducens (strain ATCC BAA-1160 / DSM 100696 / MI-1) (Desulfotomaculum reducens).